We begin with the raw amino-acid sequence, 256 residues long: UPF0246 protein Sbal_1048 (256 aa).

The protein belongs to the UPF0246 family.

The sequence is that of UPF0246 protein Sbal_1048 from Shewanella baltica (strain OS155 / ATCC BAA-1091).